Reading from the N-terminus, the 296-residue chain is Acetylglutamate kinase (296 aa).

Substrate contacts are provided by residues 69-70 (GG), Arg91, and Asn193.

It belongs to the acetylglutamate kinase family. ArgB subfamily.

The protein resides in the cytoplasm. The enzyme catalyses N-acetyl-L-glutamate + ATP = N-acetyl-L-glutamyl 5-phosphate + ADP. It functions in the pathway amino-acid biosynthesis; L-arginine biosynthesis; N(2)-acetyl-L-ornithine from L-glutamate: step 2/4. Catalyzes the ATP-dependent phosphorylation of N-acetyl-L-glutamate. This Verminephrobacter eiseniae (strain EF01-2) protein is Acetylglutamate kinase.